Consider the following 573-residue polypeptide: E3 ubiquitin-protein ligase RNF168 (573 aa).

An RING-type zinc finger spans residues 16-55 (CQICVEILFEPVTLPCNHTLCKPCFESTVEKASLCCPFCR). Ser70 carries the post-translational modification Phosphoserine. The LR motif 1 signature appears at 110-128 (LSKPGELRREYEEEISKVE). Residues 143–151 (EEYIQKLLA) carry the UMI motif motif. Disordered regions lie at residues 153–174 (EEEE…QLKS) and 196–277 (ASPL…EDMP). Residues 157–174 (EKRQAEKRHREMEEQLKS) show a composition bias toward basic and acidic residues. Positions 168-191 (MEEQLKSDEELARRLSLDINNFCE) match the MIU motif 1 motif. Phosphoserine is present on Ser197. Lys210 participates in a covalent cross-link: Glycyl lysine isopeptide (Lys-Gly) (interchain with G-Cter in SUMO2). Positions 231 to 243 (PKSQLGSASQSEV) are enriched in polar residues. Basic and acidic residues predominate over residues 245-261 (QEDRKSSMSKKIDDNSD). Thr363 carries the phosphothreonine modification. Position 416 is a phosphoserine (Ser416). The MIU motif 2 signature appears at 440–463 (RHKQEKQDRLLALQLQEEVDQEQM). Residues 456 to 528 (EEVDQEQMRP…NHQQPSFKIQ (73 aa)) form a disordered region. Over residues 461 to 470 (EQMRPDRQKG) the composition is skewed to basic and acidic residues. Residues 467 to 478 (RQKGSPDGYQLR) carry the LR motif 2 motif. A Phosphoserine modification is found at Ser471. Residues 494 to 519 (NSRDRNSKRQTELEQPKPRTDSKNEN) show a composition bias toward basic and acidic residues. A Glycyl lysine isopeptide (Lys-Gly) (interchain with G-Cter in SUMO2) cross-link involves residue Lys530. The disordered stretch occupies residues 540–573 (NSTNDNCNVSKTAHSLQPSKSQKSIFQMFQRVTK).

The protein belongs to the RNF168 family. As to quaternary structure, monomer. Interacts with UBE2N/UBC13. Sumoylated with SUMO1 by PIAS4 in response to double-strand breaks (DSBs). In terms of processing, ubiquitinated.

It localises to the nucleus. The enzyme catalyses S-ubiquitinyl-[E2 ubiquitin-conjugating enzyme]-L-cysteine + [acceptor protein]-L-lysine = [E2 ubiquitin-conjugating enzyme]-L-cysteine + N(6)-ubiquitinyl-[acceptor protein]-L-lysine.. Its pathway is protein modification; protein ubiquitination. E3 ubiquitin-protein ligase required for accumulation of repair proteins to sites of DNA damage. Acts with UBE2N/UBC13 to amplify the RNF8-dependent histone ubiquitination. Recruited to sites of DNA damage at double-strand breaks (DSBs) by binding to ubiquitinated histone H2A and H2AX and amplifies the RNF8-dependent H2A ubiquitination, promoting the formation of 'Lys-63'-linked ubiquitin conjugates. This leads to concentrate ubiquitinated histones H2A and H2AX at DNA lesions to the threshold required for recruitment of TP53BP1 and BRCA1. Also recruited at DNA interstrand cross-links (ICLs) sites and promotes accumulation of 'Lys-63'-linked ubiquitination of histones H2A and H2AX, leading to recruitment of FAAP20 and Fanconi anemia (FA) complex, followed by interstrand cross-link repair. H2A ubiquitination also mediates the ATM-dependent transcriptional silencing at regions flanking DSBs in cis, a mechanism to avoid collision between transcription and repair intermediates. Also involved in class switch recombination in immune system, via its role in regulation of DSBs repair. Following DNA damage, promotes the ubiquitination and degradation of JMJD2A/KDM4A in collaboration with RNF8, leading to unmask H4K20me2 mark and promote the recruitment of TP53BP1 at DNA damage sites. Not able to initiate 'Lys-63'-linked ubiquitination in vitro; possibly due to partial occlusion of the UBE2N/UBC13-binding region. Catalyzes monoubiquitination of 'Lys-13' and 'Lys-15' of nucleosomal histone H2A (H2AK13Ub and H2AK15Ub, respectively). The sequence is that of E3 ubiquitin-protein ligase RNF168 from Bos taurus (Bovine).